A 347-amino-acid polypeptide reads, in one-letter code: MNPLIFTMILLTVMLGTAIVMTTSHWVMAWIGFEMNMLAVIPILMKKYNPRSMEASTKYFLTQATASMLLMLAIVINLVYSGQWSMTKPLTSTTSIIMTLALAMKLGLAPFHFWVPEVTQGVQLSSGLILLTWQKLAPMSILYQISPTINLDLLLLMSLLSILVGGWGGLNQTQLRKIMAYSSIAHMGWMTAIMVYNPTMALLNLVIYILLTTTTFMMLMMNSSTTTLSLSHMWNKTPLLTTAILTIMLSLGGLPPLSGFTPKWMIIQELTKNDNMIMPTIMAVMALLNLYFYMRLTYSTSLTMFPSTNNMKIKWQFSHKKPTANLSPLIILSTLILPLSPMLALLE.

The next 11 membrane-spanning stretches (helical) occupy residues 3–23 (PLIF…VMTT), 25–45 (HWVM…PILM), 59–79 (YFLT…INLV), 96–116 (IIMT…FWVP), 122–142 (VQLS…MSIL), 149–169 (INLD…GWGG), 178–198 (IMAY…VYNP), 200–220 (MALL…MMLM), 240–260 (LTTA…LSGF), 276–296 (MIMP…YMRL), and 326–346 (LSPL…LALL).

It belongs to the complex I subunit 2 family. Core subunit of respiratory chain NADH dehydrogenase (Complex I) which is composed of 45 different subunits. Interacts with TMEM242.

It localises to the mitochondrion inner membrane. The catalysed reaction is a ubiquinone + NADH + 5 H(+)(in) = a ubiquinol + NAD(+) + 4 H(+)(out). Core subunit of the mitochondrial membrane respiratory chain NADH dehydrogenase (Complex I) which catalyzes electron transfer from NADH through the respiratory chain, using ubiquinone as an electron acceptor. Essential for the catalytic activity and assembly of complex I. This is NADH-ubiquinone oxidoreductase chain 2 from Nyctimene albiventer (Common tube-nosed fruit bat).